Consider the following 95-residue polypeptide: Internal protein I (95 aa).

Residues 1–19 constitute a propeptide that is removed on maturation; sequence MKTFKEFTSTTTPVSTITE.

Its function is as follows. Internal protein I is one of four proteins in a complex that functions in bacteriophage head maturation. The polypeptide is Internal protein I (ipi1) (Escherichia coli (Bacteriophage T4)).